A 1791-amino-acid polypeptide reads, in one-letter code: Sodium channel protein type 11 subunit alpha (1791 aa).

Over Met1 to Ser126 the chain is Cytoplasmic. The stretch at Phe115–Lys408 is one I repeat. A helical transmembrane segment spans residues Val127–Thr148. Residues Gly149–Ser156 lie on the Extracellular side of the membrane. The chain crosses the membrane as a helical span at residues Asn157–Ala180. The Cytoplasmic segment spans residues Arg181–Arg192. Residues Asp193–Pro212 traverse the membrane as a helical segment. Topologically, residues Gly213–Leu219 are extracellular. The chain crosses the membrane as a helical; Voltage-sensor span at residues Pro220–Leu239. The Cytoplasmic segment spans residues Lys240–Asn255. The helical transmembrane segment at Val256–Leu269 threads the bilayer. Residues Val270–Asn344 are Extracellular-facing. Cysteines 283 and 322 form a disulfide. N-linked (GlcNAc...) asparagine glycans are attached at residues Asn290 and Asn338. Residues Phe345–Leu369 constitute an intramembrane region (pore-forming). Residues Arg370–Ser376 lie on the Extracellular side of the membrane. A helical membrane pass occupies residues Val377 to Ala402. Over Tyr403 to Thr572 the chain is Cytoplasmic. The stretch at Cys559–Gln833 is one II repeat. Residues Val573 to Met596 traverse the membrane as a helical segment. Residues Glu597 to Lys607 lie on the Extracellular side of the membrane. Residues Met608 to Leu631 form a helical membrane-spanning segment. Topologically, residues Asp632–Arg639 are cytoplasmic. Residues Gly640–Cys659 form a helical membrane-spanning segment. The Extracellular segment spans residues Val660–Pro667. The chain crosses the membrane as a helical; Voltage-sensor span at residues Phe668 to Leu687. Over Asn688–Gly702 the chain is Cytoplasmic. The helical transmembrane segment at Ser703 to Arg725 threads the bilayer. The Extracellular portion of the chain corresponds to Ser726–Asp753. Residues Phe754 to Trp774 constitute an intramembrane region (pore-forming). The Extracellular segment spans residues Glu775–Ser785. Cys776 and Cys787 are oxidised to a cystine. N-linked (GlcNAc...) asparagine glycosylation is present at Asn781. Residues Leu786–Leu811 traverse the membrane as a helical segment. Topologically, residues Asn812–Gln1051 are cytoplasmic. One copy of the III repeat lies at Asn1044–Leu1339. The helical transmembrane segment at Ile1052–Ile1074 threads the bilayer. At Phe1075 to Glu1088 the chain is on the extracellular side. Residues Leu1089–Phe1114 form a helical membrane-spanning segment. Topologically, residues Gly1115–Ser1120 are cytoplasmic. The chain crosses the membrane as a helical span at residues Ala1121–Ile1138. Asn1139 is a topological domain (extracellular). A helical; Voltage-sensor transmembrane segment spans residues Leu1140–Phe1161. The Cytoplasmic segment spans residues Glu1162–Asn1180. The chain crosses the membrane as a helical span at residues Val1181 to Gly1202. The Extracellular segment spans residues Lys1203–Val1243. N-linked (GlcNAc...) asparagine glycans are attached at residues Asn1209, Asn1216, Asn1222, and Asn1230. Residues Gly1244–Ala1265 constitute an intramembrane region (pore-forming). The Extracellular portion of the chain corresponds to Ala1266 to Asn1281. A helical membrane pass occupies residues Ser1282–Ile1308. Residues Asp1309–Asp1361 lie on the Cytoplasmic side of the membrane. The IV repeat unit spans residues Ile1348–Gln1639. Residues Ile1362–Ala1385 traverse the membrane as a helical segment. Residues Glu1386–Ser1396 lie on the Extracellular side of the membrane. A helical transmembrane segment spans residues Ile1397–Leu1420. Over Arg1421–Thr1426 the chain is Cytoplasmic. A helical transmembrane segment spans residues Asn1427–Glu1450. The Extracellular portion of the chain corresponds to Asn1451–Leu1461. A helical; Voltage-sensor membrane pass occupies residues Phe1462 to Arg1484. The Cytoplasmic portion of the chain corresponds to Thr1485–Asn1499. Residues Ile1500–Val1522 traverse the membrane as a helical segment. Over Asn1523–Thr1536 the chain is Extracellular. The pore-forming intramembrane region spans Phe1537–Pro1559. The Extracellular portion of the chain corresponds to Met1560 to Ile1579. N-linked (GlcNAc...) asparagine glycosylation is present at Asn1568. A helical membrane pass occupies residues Ala1580 to Leu1604. The Cytoplasmic portion of the chain corresponds to Glu1605 to Asp1791.

It belongs to the sodium channel (TC 1.A.1.10) family. Nav1.9/SCN11A subfamily. In terms of assembly, the voltage-resistant sodium channel consists of an ion conducting pore forming alpha-subunit regulated by one or more auxiliary subunits SCN1B, SCN2B and SCN3B. In terms of tissue distribution, expressed in the dorsal root ganglia and trigeminal ganglia, olfactory bulb, hippocampus, cerebellar cortex, spinal cord, spleen, small intestine and placenta.

Its subcellular location is the cell membrane. The enzyme catalyses Na(+)(in) = Na(+)(out). With respect to regulation, activity is not sensitive to inhibition by tetrodotoxin. In terms of biological role, sodium channel mediating the voltage-dependent sodium ion permeability of excitable membranes. Assuming opened or closed conformations in response to the voltage difference across the membrane, the protein forms a sodium-selective channel through which sodium ions may pass in accordance with their electrochemical gradient. Involved in membrane depolarization during action potential in nociceptors which function as key relay stations for the electrical transmission of pain signals from the periphery to the central nervous system. Also involved in rapid BDNF-evoked neuronal depolarization. This chain is Sodium channel protein type 11 subunit alpha, found in Homo sapiens (Human).